The following is a 322-amino-acid chain: Cytochrome c biogenesis protein CcsA (322 aa).

Helical transmembrane passes span 9–29 (ILTH…LITL), 44–64 (GMIA…IYSG), 71–91 (LYES…VPYF), 98–118 (LTTI…SGLL), 143–163 (MILS…LLVI), 226–246 (VISL…VWAN), 253–273 (WSWD…AIYL), and 287–307 (AIVA…VNLL).

This sequence belongs to the CcmF/CycK/Ccl1/NrfE/CcsA family. In terms of assembly, may interact with Ccs1.

It is found in the plastid. It localises to the chloroplast thylakoid membrane. Its function is as follows. Required during biogenesis of c-type cytochromes (cytochrome c6 and cytochrome f) at the step of heme attachment. This is Cytochrome c biogenesis protein CcsA from Helianthus annuus (Common sunflower).